The following is a 230-amino-acid chain: Nicotinamide riboside kinase (230 aa).

12–20 (GASCSGKST) serves as a coordination point for ATP. Positions 19 and 38 each coordinate Mg(2+). Catalysis depends on Asp38, which acts as the Proton acceptor. Substrate is bound by residues 38–41 (DDFY) and 56–57 (WD). An ATP-binding site is contributed by Arg153. Substrate is bound by residues Arg154 and 159–160 (GY). Residues 157-159 (RTG) and 203-205 (RIQ) contribute to the ATP site.

Belongs to the uridine kinase family. NRK subfamily.

It carries out the reaction beta-nicotinamide D-riboside + ATP = beta-nicotinamide D-ribonucleotide + ADP + H(+). It catalyses the reaction beta-D-ribosylnicotinate + ATP = nicotinate beta-D-ribonucleotide + ADP + H(+). It participates in cofactor biosynthesis; NAD(+) biosynthesis. Its function is as follows. Catalyzes the phosphorylation of nicotinamide riboside (NR) and nicotinic acid riboside (NaR) to form nicotinamide mononucleotide (NMN) and nicotinic acid mononucleotide (NaMN). The polypeptide is Nicotinamide riboside kinase (nrk1) (Schizosaccharomyces pombe (strain 972 / ATCC 24843) (Fission yeast)).